Here is a 66-residue protein sequence, read N- to C-terminus: Large ribosomal subunit protein bL35 (66 aa).

Basic residues-rich tracts occupy residues Met1 to Arg16 and Lys23 to Arg45. Residues Met1–Gly53 are disordered.

The protein belongs to the bacterial ribosomal protein bL35 family.

This chain is Large ribosomal subunit protein bL35, found in Enterococcus faecalis (strain ATCC 700802 / V583).